A 129-amino-acid polypeptide reads, in one-letter code: NADH-quinone oxidoreductase subunit A (129 aa).

3 helical membrane-spanning segments follow: residues 9–29, 68–88, and 97–117; these read FPIGVVLLVAVVLAFTMLGLA, LLFIVFDIEAIFLYPWAVLLL, and LGWPGFISMGIFVFTLVAGLV.

Belongs to the complex I subunit 3 family. NDH-1 is composed of 14 different subunits. Subunits NuoA, H, J, K, L, M, N constitute the membrane sector of the complex.

It localises to the cell inner membrane. The enzyme catalyses a quinone + NADH + 5 H(+)(in) = a quinol + NAD(+) + 4 H(+)(out). In terms of biological role, NDH-1 shuttles electrons from NADH, via FMN and iron-sulfur (Fe-S) centers, to quinones in the respiratory chain. The immediate electron acceptor for the enzyme in this species is believed to be ubiquinone. Couples the redox reaction to proton translocation (for every two electrons transferred, four hydrogen ions are translocated across the cytoplasmic membrane), and thus conserves the redox energy in a proton gradient. This is NADH-quinone oxidoreductase subunit A from Anaeromyxobacter dehalogenans (strain 2CP-C).